The following is a 230-amino-acid chain: Ribonuclease 3 (230 aa).

The region spanning Tyr5–Asp125 is the RNase III domain. Glu40 lines the Mg(2+) pocket. The active site involves Asp44. Mg(2+) is bound by residues Asp111 and Glu114. Residue Glu114 is part of the active site. The region spanning Asp153–Gln223 is the DRBM domain.

Belongs to the ribonuclease III family. In terms of assembly, homodimer. Mg(2+) serves as cofactor.

It is found in the cytoplasm. It catalyses the reaction Endonucleolytic cleavage to 5'-phosphomonoester.. Digests double-stranded RNA. Involved in the processing of primary rRNA transcript to yield the immediate precursors to the large and small rRNAs (23S and 16S). Processes some mRNAs, and tRNAs when they are encoded in the rRNA operon. Processes pre-crRNA and tracrRNA of type II CRISPR loci if present in the organism. The sequence is that of Ribonuclease 3 from Francisella tularensis subsp. holarctica (strain FTNF002-00 / FTA).